Reading from the N-terminus, the 346-residue chain is Methylthioribose-1-phosphate isomerase (346 aa).

Substrate is bound by residues 46 to 48, Arg-89, and Gln-196; that span reads RGA. Asp-237 (proton donor) is an active-site residue. Residue 247-248 participates in substrate binding; sequence NK.

The protein belongs to the eIF-2B alpha/beta/delta subunits family. MtnA subfamily.

It catalyses the reaction 5-(methylsulfanyl)-alpha-D-ribose 1-phosphate = 5-(methylsulfanyl)-D-ribulose 1-phosphate. It functions in the pathway amino-acid biosynthesis; L-methionine biosynthesis via salvage pathway; L-methionine from S-methyl-5-thio-alpha-D-ribose 1-phosphate: step 1/6. Its function is as follows. Catalyzes the interconversion of methylthioribose-1-phosphate (MTR-1-P) into methylthioribulose-1-phosphate (MTRu-1-P). The protein is Methylthioribose-1-phosphate isomerase of Geobacter metallireducens (strain ATCC 53774 / DSM 7210 / GS-15).